We begin with the raw amino-acid sequence, 292 residues long: Elongation factor Ts (292 aa).

An involved in Mg(2+) ion dislocation from EF-Tu region spans residues 79–82 (TDFV).

It belongs to the EF-Ts family.

It localises to the cytoplasm. Associates with the EF-Tu.GDP complex and induces the exchange of GDP to GTP. It remains bound to the aminoacyl-tRNA.EF-Tu.GTP complex up to the GTP hydrolysis stage on the ribosome. The polypeptide is Elongation factor Ts (Staphylococcus haemolyticus (strain JCSC1435)).